The chain runs to 514 residues: 2'-5'-oligoadenylate synthase-like protein (514 aa).

A2 carries the post-translational modification N-acetylalanine. Ubiquitin-like domains follow at residues 354–433 (IHLT…IPSE) and 434–509 (IQVF…KGEA).

It belongs to the 2-5A synthase family. Specifically interacts with the ligand binding domain of the thyroid receptor (TR). TRIP14 does not require the presence of thyroid hormone for its interaction. Binds MBD1. Expressed in most tissues, with the highest levels in primary blood Leukocytes and other hematopoietic system tissues, colon, stomach and to some extent in testis.

It localises to the nucleus. The protein localises to the nucleolus. It is found in the cytoplasm. In terms of biological role, does not have 2'-5'-OAS activity, but can bind double-stranded RNA. Displays antiviral activity against encephalomyocarditis virus (EMCV) and hepatitis C virus (HCV) via an alternative antiviral pathway independent of RNase L. The protein is 2'-5'-oligoadenylate synthase-like protein (OASL) of Homo sapiens (Human).